Here is a 91-residue protein sequence, read N- to C-terminus: Small ribosomal subunit protein uS19 (91 aa).

It belongs to the universal ribosomal protein uS19 family.

Its function is as follows. Protein S19 forms a complex with S13 that binds strongly to the 16S ribosomal RNA. The sequence is that of Small ribosomal subunit protein uS19 from Dechloromonas aromatica (strain RCB).